The following is a 121-amino-acid chain: Large ribosomal subunit protein uL22 (121 aa).

This sequence belongs to the universal ribosomal protein uL22 family. As to quaternary structure, part of the 50S ribosomal subunit.

Its function is as follows. This protein binds specifically to 23S rRNA; its binding is stimulated by other ribosomal proteins, e.g. L4, L17, and L20. It is important during the early stages of 50S assembly. It makes multiple contacts with different domains of the 23S rRNA in the assembled 50S subunit and ribosome. The globular domain of the protein is located near the polypeptide exit tunnel on the outside of the subunit, while an extended beta-hairpin is found that lines the wall of the exit tunnel in the center of the 70S ribosome. In Salinibacter ruber (strain DSM 13855 / M31), this protein is Large ribosomal subunit protein uL22.